Reading from the N-terminus, the 1031-residue chain is Protein draper (1031 aa).

Residues Met-1–Ala-16 form the signal peptide. Residues Gln-17–Ser-800 are Extracellular-facing. The region spanning Gly-25–Pro-100 is the EMI domain. 6 cysteine pairs are disulfide-bonded: Cys-29/Cys-88, Cys-55/Cys-62, Cys-87/Cys-98, Cys-102/Cys-111, Cys-106/Cys-117, and Cys-119/Cys-128. The N-linked (GlcNAc...) asparagine glycan is linked to Asn-73. 6 consecutive EGF-like domains span residues Val-99–Asp-129, Tyr-137–Ala-172, Phe-180–Asp-215, His-223–Ala-258, Tyr-266–Phe-301, and Tyr-309–Ala-344. Asn-140 carries N-linked (GlcNAc...) asparagine glycosylation. Intrachain disulfides connect Cys-141–Cys-153, Cys-147–Cys-160, and Cys-162–Cys-171. An N-linked (GlcNAc...) asparagine glycan is attached at Asn-183. 9 cysteine pairs are disulfide-bonded: Cys-184–Cys-196, Cys-190–Cys-203, Cys-205–Cys-214, Cys-227–Cys-239, Cys-233–Cys-246, Cys-248–Cys-257, Cys-270–Cys-282, Cys-276–Cys-289, and Cys-291–Cys-300. Asn-312 carries an N-linked (GlcNAc...) asparagine glycan. Disulfide bonds link Cys-313-Cys-325, Cys-319-Cys-332, and Cys-334-Cys-343. Residue Asn-329 is glycosylated (N-linked (GlcNAc...) asparagine). Residue Asn-358 is glycosylated (N-linked (GlcNAc...) asparagine). 2 EGF-like domains span residues Tyr-398–Glu-433 and Phe-484–Glu-519. Cystine bridges form between Cys-402/Cys-414, Cys-408/Cys-421, Cys-423/Cys-432, Cys-488/Cys-500, Cys-494/Cys-507, and Cys-509/Cys-518. Asn-418 carries N-linked (GlcNAc...) asparagine glycosylation. Asn-504 carries N-linked (GlcNAc...) asparagine glycosylation. 3 N-linked (GlcNAc...) asparagine glycosylation sites follow: Asn-540, Asn-584, and Asn-585. Residues Tyr-572–Ala-607 form the EGF-like 9 domain. 3 disulfides stabilise this stretch: Cys-576/Cys-588, Cys-582/Cys-595, and Cys-597/Cys-606. A glycan (N-linked (GlcNAc...) asparagine) is linked at Asn-630. An EGF-like 10 domain is found at Tyr-660–Asn-695. Intrachain disulfides connect Cys-664–Cys-676, Cys-670–Cys-683, and Cys-685–Cys-694. Asn-695 and Asn-795 each carry an N-linked (GlcNAc...) asparagine glycan. A helical membrane pass occupies residues Val-801–Tyr-821. The Cytoplasmic segment spans residues Tyr-822–Lys-1031. Residues Lys-940 to Tyr-954 are compositionally biased toward basic and acidic residues. 2 disordered regions span residues Lys-940–His-964 and Thr-989–Lys-1031. Over residues Asp-1009–Lys-1031 the composition is skewed to polar residues.

It belongs to the MEGF family. In terms of assembly, interacts (via the cytoplasmic domain) with shark; this is required for the recruitment of drpr and glial cells to severed axons and for the phagocytosis of axonal debris by glial cells following axon injury. Interacts with ced-6. Interacts with csw; this results in dephosphorylation of drpr isoform A which is required for the inhibition of glial cell engulfment of axonal debris produced following axonal injury. In terms of processing, phosphorylated on tyrosine residues. Phosphorylation is induced by binding to prtp. It is also induced by binding to the membrane phospholipid phosphatidylserine. Phosphorylation may be mediated directly or indirectly by Src42a and is required for interaction with shark. Post-translationally, dephosphorylated by csw which is required for the inhibition of glial cell engulfment of axonal debris produced following axonal injury. As to expression, expressed in adult head (at protein level). Expressed in glia, macrophages and ectoderm (at protein level). Detected in glia around the mushroom body dorsal lobe and in glial processes infiltrating the medial lobe (at protein level). Expressed in adult brain glia including antennal lobe glia (at protein level). Expressed in the larval fat body (at protein level). Expressed in the ovary (at protein level). Isoform B: Predominant isoform in adult glia.

Its subcellular location is the cell membrane. It localises to the cell projection. The protein resides in the axon. The protein localises to the cytoplasm. It is found in the postsynaptic cell membrane. Its subcellular location is the cell cortex. It localises to the phagocytic cup. The protein resides in the cytoplasmic vesicle. The protein localises to the phagosome. Its function is as follows. Receptor which is involved in the phagocytosis of a variety of cells including apoptotic cells, severed and pruned axons, degenerating dendrites, salivary gland cells, germline cells and bacteria. Binds to the ligand prtp which relocates from the endoplasmic reticulum to the cell surface during apoptosis. Ligand-binding may promote tyrosine phosphorylation mediated by Src42a, interaction with shark and subsequent activation of phagocytosis. Also binds to the membrane phospholipid phosphatidylserine which is exposed on the surface of apoptotic cells. Required for the phagocytosis of apoptotic cells by macrophages. Also required for the phagocytosis of apoptotic neurons by glial cells in the embryonic nervous system. Acts downstream of NimC4/simu in the glial phagocytosis of apoptotic neurons. Plays a role in the glial engulfment of larval axons as part of programmed axon pruning during metamorphosis. Also mediates glial cell clearance of severed axons following axonal injury. Required for the engulfment of degenerating dendrites by epidermal cells. Required in the ovary for the engulfment and subsequent processing of dying germline cells by follicular epithelial cells through activation of the JNK/bsk pathway. Plays a role in neuromuscular junction development by mediating the clearance of presynaptic debris and immature boutons which are shed by growing synapses. Required for larval salivary gland cell death which occurs following a rise in steroid levels after puparium formation. Also involved in bacterial phagocytosis. Required for hemocyte phagocytosis of the Gram-positive bacterium S.aureus. Lipoteichoic acid, synthesized by the S.aureus lipoteichoic acid synthase ltaS, acts as a ligand for drpr in this process. Together with Src42a and shark, promotes the migration of macrophages to sites of wounding as part of a signaling cascade where Scr42a detects production of hydrogen peroxide at wound sites which triggers phosphorylation of drpr and subsequent recruitment and activation of shark. Also required for macrophage priming which occurs following phagocytosis of apoptotic cells and ensures that macrophages develop a form of molecular memory that allows them to later mount an inflammatory response to tissue damage and bacterial infection. Is also an essential factor in the regulation of muscle development and myogenesis, and as a consequence is required for normal locomotion. Likely to control the balance between skeletal muscle satellite cells proliferation and differentiation through regulation of the notch signaling pathway. In terms of biological role, promotes engulfment of axonal debris by glial cells following axonal injury. Functionally, potently inhibits glial cell engulfment of axonal debris produced following axonal injury. This chain is Protein draper, found in Drosophila melanogaster (Fruit fly).